A 112-amino-acid chain; its full sequence is Photosystem II reaction center Psb28 protein (112 aa).

It belongs to the Psb28 family. In terms of assembly, part of the photosystem II complex.

The protein resides in the plastid. It is found in the cyanelle thylakoid membrane. This Cyanophora paradoxa protein is Photosystem II reaction center Psb28 protein.